A 408-amino-acid polypeptide reads, in one-letter code: Multidrug resistance protein MdtG (408 aa).

The next 11 membrane-spanning stretches (helical) occupy residues 16 to 36, 58 to 78, 92 to 112, 115 to 135, 146 to 166, 173 to 193, 224 to 244, 256 to 276, 290 to 310, 319 to 339, and 378 to 398; these read LIVA…VMPF, IVFS…GGLA, LGMG…QFLI, ALLG…ATQV, TLST…GLLA, PVFF…LFCI, LFVT…ILTL, VAFI…LSAP, ILIT…YVQT, FLLG…LVYN, and AVFL…WNSL.

It belongs to the major facilitator superfamily. DHA1 family. MdtG (TC 2.A.1.2.20) subfamily.

The protein resides in the cell inner membrane. Its function is as follows. Confers resistance to fosfomycin and deoxycholate. The sequence is that of Multidrug resistance protein MdtG from Escherichia coli O7:K1 (strain IAI39 / ExPEC).